The following is a 654-amino-acid chain: ATP-dependent rRNA helicase spb-4 (654 aa).

A Q motif motif is present at residues 17 to 45 (WDALTPPLAQWILDYLSSMGFTQPTPVQK). The region spanning 48–249 (LELFRGNKDV…TVGLLYPHKI (202 aa)) is the Helicase ATP-binding domain. 61–68 (AVTGSGKT) lines the ATP pocket. The DEAD box signature appears at 197-200 (DEAD). A Helicase C-terminal domain is found at 286–444 (AIVQLLEKLE…VTPDEVERVS (159 aa)). Residues 531–631 (REKKRQEELA…EERAAALAAN (101 aa)) adopt a coiled-coil conformation. Basic and acidic residues predominate over residues 542 to 577 (WKEEKAKRAQEENTGDKRKKNEAWSGKAEQEETKLQ). Residues 542-654 (WKEEKAKRAQ…SDEEFGGFDD (113 aa)) are disordered. The segment covering 578–588 (RREKKRRKREA) has biased composition (basic residues). The segment covering 589–625 (KKFSEMTEKEKEEHLKLEQMIEEVRKRNEAKAAEERA) has biased composition (basic and acidic residues). A compositionally biased stretch (acidic residues) spans 644–654 (DSDEEFGGFDD).

Belongs to the DEAD box helicase family. DDX55/SPB4 subfamily. Component of pre-60S ribosomal complexes.

It is found in the nucleus. It localises to the nucleolus. The catalysed reaction is ATP + H2O = ADP + phosphate + H(+). In terms of biological role, ATP-binding RNA helicase involved in the biogenesis of 60S ribosomal subunits. Binds 90S pre-ribosomal particles and dissociates from pre-60S ribosomal particles after processing of 27SB pre-rRNA. Required for the normal formation of 18S rRNA through the processing of pre-rRNAs at sites A0, A1 and A2, and the normal formation of 25S and 5.8S rRNAs through the processing of pre-rRNAs at sites C1 and C2. This chain is ATP-dependent rRNA helicase spb-4, found in Neurospora crassa (strain ATCC 24698 / 74-OR23-1A / CBS 708.71 / DSM 1257 / FGSC 987).